We begin with the raw amino-acid sequence, 60 residues long: uncharacterized protein (60 aa).

A helical transmembrane segment spans residues 33 to 55 (FRLLRGIFLITLVIWTVVWLKLL).

The protein belongs to the HHV-5 UL2 protein family.

Its subcellular location is the host membrane. This is an uncharacterized protein from Human cytomegalovirus (strain AD169) (HHV-5).